Here is a 100-residue protein sequence, read N- to C-terminus: MGSRFLLALFLVLLVLGYEVQGSQQIQQDEAGSLALLNKLPESLSSYWDIAKAAVGDLYEKTYLTSVDEKLRDMYSKSSAAVSTYAGIFTDQILTLLKGE.

A signal peptide spans Met-1 to Gly-22. The interval Ser-66 to Met-74 is lipid binding. Residues Ser-78–Glu-100 are lipoprotein lipase cofactor.

Belongs to the apolipoprotein C2 family. Proapolipoprotein C-II is synthesized as a sialic acid containing glycoprotein which is subsequently desialylated prior to its proteolytic processing. Post-translationally, proapolipoprotein C-II, the major form found in plasma undergoes proteolytic cleavage of its N-terminal hexapeptide to generate the mature form apolipoprotein C-II, which occurs as the minor form in plasma.

It is found in the secreted. Its function is as follows. Component of chylomicrons, very low-density lipoproteins (VLDL), low-density lipoproteins (LDL), and high-density lipoproteins (HDL) in plasma. Plays an important role in lipoprotein metabolism as an activator of lipoprotein lipase. The sequence is that of Apolipoprotein C-II (Apoc2) from Neotoma lepida (Desert woodrat).